Here is a 389-residue protein sequence, read N- to C-terminus: STE20-related kinase adapter protein alpha (389 aa).

The region spanning 11–321 (YELLTIIGRG…AGALLNHPFF (311 aa)) is the Protein kinase domain.

This sequence belongs to the protein kinase superfamily. STE Ser/Thr protein kinase family. STE20 subfamily. Component of a trimeric complex composed of STK11/LKB1, STRAD (STRADA or STRADB) and CAB39/MO25 (CAB39/MO25alpha or CAB39L/MO25beta): the complex tethers STK11/LKB1 in the cytoplasm and stimulates its catalytic activity. As to expression, expressed in brain, hypothalamus, heart and skeletal muscle.

It is found in the nucleus. The protein localises to the cytoplasm. Its function is as follows. Pseudokinase which, in complex with CAB39/MO25 (CAB39/MO25alpha or CAB39L/MO25beta), binds to and activates STK11/LKB1. Adopts a closed conformation typical of active protein kinases and binds STK11/LKB1 as a pseudosubstrate, promoting conformational change of STK11/LKB1 in an active conformation. The sequence is that of STE20-related kinase adapter protein alpha (STRADA) from Gallus gallus (Chicken).